The following is a 568-amino-acid chain: Proline--tRNA ligase (568 aa).

The protein belongs to the class-II aminoacyl-tRNA synthetase family. ProS type 1 subfamily. In terms of assembly, homodimer.

It is found in the cytoplasm. It catalyses the reaction tRNA(Pro) + L-proline + ATP = L-prolyl-tRNA(Pro) + AMP + diphosphate. In terms of biological role, catalyzes the attachment of proline to tRNA(Pro) in a two-step reaction: proline is first activated by ATP to form Pro-AMP and then transferred to the acceptor end of tRNA(Pro). As ProRS can inadvertently accommodate and process non-cognate amino acids such as alanine and cysteine, to avoid such errors it has two additional distinct editing activities against alanine. One activity is designated as 'pretransfer' editing and involves the tRNA(Pro)-independent hydrolysis of activated Ala-AMP. The other activity is designated 'posttransfer' editing and involves deacylation of mischarged Ala-tRNA(Pro). The misacylated Cys-tRNA(Pro) is not edited by ProRS. The sequence is that of Proline--tRNA ligase from Listeria innocua serovar 6a (strain ATCC BAA-680 / CLIP 11262).